A 332-amino-acid chain; its full sequence is Glycerol-3-phosphate dehydrogenase [NAD(P)+] (332 aa).

The NADPH site is built by serine 15, tryptophan 16, and lysine 110. Lysine 110, glycine 137, and serine 139 together coordinate sn-glycerol 3-phosphate. Alanine 141 contacts NADPH. Residues lysine 192, aspartate 245, serine 255, arginine 256, and asparagine 257 each contribute to the sn-glycerol 3-phosphate site. Lysine 192 (proton acceptor) is an active-site residue. Arginine 256 is an NADPH binding site. NADPH is bound at residue glutamate 282.

Belongs to the NAD-dependent glycerol-3-phosphate dehydrogenase family.

It localises to the cytoplasm. The catalysed reaction is sn-glycerol 3-phosphate + NAD(+) = dihydroxyacetone phosphate + NADH + H(+). The enzyme catalyses sn-glycerol 3-phosphate + NADP(+) = dihydroxyacetone phosphate + NADPH + H(+). Its pathway is membrane lipid metabolism; glycerophospholipid metabolism. Functionally, catalyzes the reduction of the glycolytic intermediate dihydroxyacetone phosphate (DHAP) to sn-glycerol 3-phosphate (G3P), the key precursor for phospholipid synthesis. The sequence is that of Glycerol-3-phosphate dehydrogenase [NAD(P)+] from Coxiella burnetii (strain CbuK_Q154) (Coxiella burnetii (strain Q154)).